A 669-amino-acid chain; its full sequence is Thrombospondin-type laminin G domain and EAR repeat-containing protein (669 aa).

The N-terminal stretch at 1–19 (MSALLSLCFVLPLAAPGHG) is a signal peptide. The 220-residue stretch at 58 to 277 (GLQLSVAAPR…RVTLGPQPPC (220 aa)) folds into the Laminin G-like domain. EAR repeat units lie at residues 313 to 358 (DYVE…KWTE), 360 to 408 (KFVS…KWSH), 412 to 460 (KFTP…KWNP), 464 to 506 (LFEA…VHSH), 514 to 570 (SFQL…ELNV), 574 to 622 (AFVK…RWQG), and 625 to 668 (GFVA…RLRT). An N-linked (GlcNAc...) asparagine glycan is attached at Asn-320. Asn-468, Asn-497, Asn-556, and Asn-569 each carry an N-linked (GlcNAc...) asparagine glycan.

It localises to the secreted. The protein resides in the cell surface. Its subcellular location is the cell projection. It is found in the stereocilium. Plays a critical role in tooth and hair follicle morphogenesis through regulation of the Notch signaling pathway. May play a role in development or function of the auditory system. This chain is Thrombospondin-type laminin G domain and EAR repeat-containing protein (TSPEAR), found in Homo sapiens (Human).